The primary structure comprises 65 residues: Toxin VmKTx1 (65 aa).

Residues 1 to 21 form the signal peptide; sequence MKTSCLLTILLLSFLVAVAVA. A propeptide spanning residues 22-28 is cleaved from the precursor; the sequence is EGERSAR. 4 cysteine pairs are disulfide-bonded: cysteine 34–cysteine 54, cysteine 40–cysteine 59, cysteine 44–cysteine 61, and cysteine 49–cysteine 64. Cysteine 64 carries the cysteine amide modification.

This sequence belongs to the short scorpion toxin superfamily. Potassium channel inhibitor family. Alpha-KTx 23 subfamily. In terms of tissue distribution, expressed by the venom gland.

It is found in the secreted. In terms of biological role, voltage-gated potassium channel inhibitor. Selectively and reversibly binds (Kd=0.77 nM) and blocks hKv1.3/KCNA3 potassium channels of human T-lymphocytes. Also shows a very weak effect on hKv1.2/KCNA2 (Kd=7.1 uM). Also reduces the fraction of CD40L expressing T cells that are stimulated by alphaCD3/alphaCD28. This Vaejovis mexicanus smithi (Mexican scorpion) protein is Toxin VmKTx1.